Reading from the N-terminus, the 188-residue chain is MYPKRIDIIKKIVENVGEKEIIVSNIGIPSKELYYVKDRERNFYMLGSMGLASSIGLGLALNCEDKVIVIDGDGSILMNLGSLSTIGYMNPKNYILVIIDNSAYGSTGNQKTHTGKNTNLEEIAKGCGLDTITTESLEEFEKEFKNALNEEKCKVIIAKTIPYNEKCSNIEIPPVVLKYRFMEAIKRS.

It belongs to the TPP enzyme family. Heterododecamer composed of 6 subunits alpha and 6 subunits beta. Requires thiamine diphosphate as cofactor.

The catalysed reaction is 3-sulfopyruvate + H(+) = sulfoacetaldehyde + CO2. It functions in the pathway cofactor biosynthesis; coenzyme M biosynthesis; sulfoacetaldehyde from phosphoenolpyruvate and sulfite: step 4/4. With respect to regulation, inhibited by oxygen when heated in air at 80 degrees Celsius. The enzyme is reactivated by addition of dithionite. Involved in the biosynthesis of the coenzyme M (2-mercaptoethanesulfonic acid). Catalyzes the decarboxylation of sulfopyruvate to sulfoacetaldehyde. The protein is Sulfopyruvate decarboxylase subunit beta of Methanocaldococcus jannaschii (strain ATCC 43067 / DSM 2661 / JAL-1 / JCM 10045 / NBRC 100440) (Methanococcus jannaschii).